Consider the following 291-residue polypeptide: Elongation factor Ts (291 aa).

The tract at residues 81 to 84 is involved in Mg(2+) ion dislocation from EF-Tu; sequence TDFV. A disordered region spans residues 271–291; sequence EGKEKKDESFADEVMAQVRDS.

The protein belongs to the EF-Ts family.

It is found in the cytoplasm. Its function is as follows. Associates with the EF-Tu.GDP complex and induces the exchange of GDP to GTP. It remains bound to the aminoacyl-tRNA.EF-Tu.GTP complex up to the GTP hydrolysis stage on the ribosome. The protein is Elongation factor Ts of Halorhodospira halophila (strain DSM 244 / SL1) (Ectothiorhodospira halophila (strain DSM 244 / SL1)).